A 565-amino-acid chain; its full sequence is MQAFVQFLGSNPYILLFLTIGLAVWVGKFSIKGYGLGAVAAAIVVGCLVATVGAAYGVKFHLDEFAKSLLYYLFMYGVGLRVGPSFVNALNKESINYAILAIIAPILGLAIVVLGTQFFGLPLGAAGGMLAGSQTMSAAIGSAEQAVSAGVLSLGSESPEQISAMIALSYGITYIWGTVGIILLCKYLPRIWGVDAKAAALEFEKAHGVPNVDDAGLTAFHPFDLRAYRVENPESIGKTVQQFRTRFPQYQVVNVERGDQLLGPSAETVLQQGDVVALGGRLEEMTANMGMLGPEVPDARALNIPLDQAEILVTNKEVTGRPLKTFRGSELAGQIQLQRVERSGVPLPIGLETTLQKRDVLFVTGLQPAVSKAGEIFGVIARHSSATDLLTLSFGMILGFLIGLIEVPAFGAKVGLGNAGGLLLSGIIVSSISSRLRFFGNTPNAARNILEDLGLIGFVAIVGINAGADLLTQLTGAIALKIFIVGFLASTIPPIIVWAIGFHIMKINPALLMGATAGARSHSGPAREAAKEVGSSVPWLGFPVGYAVSGVLLTVFGYFAMVLAH.

5 helical membrane passes run 4-26 (FVQFLGSNPYILLFLTIGLAVWV), 33-55 (GYGLGAVAAAIVVGCLVATVGAA), 68-90 (SLLYYLFMYGVGLRVGPSFVNAL), 97-119 (YAILAIIAPILGLAIVVLGTQFF), and 162-184 (ISAMIALSYGITYIWGTVGIILL). RCK C-terminal domains are found at residues 210–295 (PNVD…LGPE) and 296–379 (VPDA…IFGV). Helical transmembrane passes span 389–411 (LLTLSFGMILGFLIGLIEVPAFG), 415–432 (GLGNAGGLLLSGIIVSSI), 453–472 (LGLIGFVAIVGINAGADLLT), 482–504 (IFIVGFLASTIPPIIVWAIGFHI), and 539–561 (WLGFPVGYAVSGVLLTVFGYFAM).

This sequence belongs to the AAE transporter (TC 2.A.81) family.

The protein resides in the cell membrane. This is an uncharacterized protein from Bordetella parapertussis (strain 12822 / ATCC BAA-587 / NCTC 13253).